A 132-amino-acid polypeptide reads, in one-letter code: Small ribosomal subunit protein uS8 (132 aa).

The protein belongs to the universal ribosomal protein uS8 family. In terms of assembly, part of the 30S ribosomal subunit. Contacts proteins S5 and S12.

One of the primary rRNA binding proteins, it binds directly to 16S rRNA central domain where it helps coordinate assembly of the platform of the 30S subunit. The protein is Small ribosomal subunit protein uS8 of Rickettsia massiliae (strain Mtu5).